We begin with the raw amino-acid sequence, 342 residues long: Phosphate acyltransferase (342 aa).

It belongs to the PlsX family. Homodimer. Probably interacts with PlsY.

The protein localises to the cytoplasm. It catalyses the reaction a fatty acyl-[ACP] + phosphate = an acyl phosphate + holo-[ACP]. It participates in lipid metabolism; phospholipid metabolism. Its function is as follows. Catalyzes the reversible formation of acyl-phosphate (acyl-PO(4)) from acyl-[acyl-carrier-protein] (acyl-ACP). This enzyme utilizes acyl-ACP as fatty acyl donor, but not acyl-CoA. This Shewanella sediminis (strain HAW-EB3) protein is Phosphate acyltransferase.